Consider the following 454-residue polypeptide: MNKCAIILAAGQGTRIKSKLPKVLHKACGKEMVNHVIDAMRNAEIDDVNVIIGKGAELVKERTTSKNVSYSLQAEQLGTGHAVKCAKDFLEGKTGVVAIFTGDAPLIKAETVKNLVDTHINEKNSATLLTSVIENPTGYGRIVRNGESVEKIVEHKDCNEQEIKIQEVNAGMYCFDIESLLTSLEQLSNDNAQGEYYLTDVIEILKKDNKKVGAMITDFEETLGVNSRAELAKVESIMRNRINRTHLDNGVTIIDPLNTYIEPEVVIGKDTIIYPGNVIEGKTVIGEDCILYPNSRINNSTIGNGVEIQSSVILDSKIGDETTVGPFAYVRPESNIGEHVRIGDFVEIKKSTIGNNTKVSHLTYIGDAEVGERCNFGCGTVVVNYDGKKKHKTIIGDDSFIGCNTNLVSPVEVKDNTYIAAGSTITKEVPEGSLAIARAKQQNIEGWVERKKLK.

The segment at 1 to 228 (MNKCAIILAA…FEETLGVNSR (228 aa)) is pyrophosphorylase. Residues 8–11 (LAAG), Lys-22, Gln-73, and 78–79 (GT) each bind UDP-N-acetyl-alpha-D-glucosamine. A Mg(2+)-binding site is contributed by Asp-103. Gly-140, Glu-154, Asn-169, and Asn-226 together coordinate UDP-N-acetyl-alpha-D-glucosamine. Asn-226 serves as a coordination point for Mg(2+). A linker region spans residues 229-249 (AELAKVESIMRNRINRTHLDN). An N-acetyltransferase region spans residues 250 to 454 (GVTIIDPLNT…EGWVERKKLK (205 aa)). Arg-331 and Lys-349 together coordinate UDP-N-acetyl-alpha-D-glucosamine. The active-site Proton acceptor is His-361. Residues Tyr-364 and Asn-375 each contribute to the UDP-N-acetyl-alpha-D-glucosamine site. Acetyl-CoA is bound by residues 384–385 (NY), Ala-421, and Arg-438.

This sequence in the N-terminal section; belongs to the N-acetylglucosamine-1-phosphate uridyltransferase family. In the C-terminal section; belongs to the transferase hexapeptide repeat family. Homotrimer. Mg(2+) serves as cofactor.

It is found in the cytoplasm. The catalysed reaction is alpha-D-glucosamine 1-phosphate + acetyl-CoA = N-acetyl-alpha-D-glucosamine 1-phosphate + CoA + H(+). It carries out the reaction N-acetyl-alpha-D-glucosamine 1-phosphate + UTP + H(+) = UDP-N-acetyl-alpha-D-glucosamine + diphosphate. It functions in the pathway nucleotide-sugar biosynthesis; UDP-N-acetyl-alpha-D-glucosamine biosynthesis; N-acetyl-alpha-D-glucosamine 1-phosphate from alpha-D-glucosamine 6-phosphate (route II): step 2/2. The protein operates within nucleotide-sugar biosynthesis; UDP-N-acetyl-alpha-D-glucosamine biosynthesis; UDP-N-acetyl-alpha-D-glucosamine from N-acetyl-alpha-D-glucosamine 1-phosphate: step 1/1. It participates in bacterial outer membrane biogenesis; LPS lipid A biosynthesis. Catalyzes the last two sequential reactions in the de novo biosynthetic pathway for UDP-N-acetylglucosamine (UDP-GlcNAc). The C-terminal domain catalyzes the transfer of acetyl group from acetyl coenzyme A to glucosamine-1-phosphate (GlcN-1-P) to produce N-acetylglucosamine-1-phosphate (GlcNAc-1-P), which is converted into UDP-GlcNAc by the transfer of uridine 5-monophosphate (from uridine 5-triphosphate), a reaction catalyzed by the N-terminal domain. This chain is Bifunctional protein GlmU, found in Clostridium perfringens (strain SM101 / Type A).